The following is a 447-amino-acid chain: Na(+)-translocating NADH-quinone reductase subunit A (447 aa).

It belongs to the NqrA family. In terms of assembly, composed of six subunits; NqrA, NqrB, NqrC, NqrD, NqrE and NqrF.

The catalysed reaction is a ubiquinone + n Na(+)(in) + NADH + H(+) = a ubiquinol + n Na(+)(out) + NAD(+). NQR complex catalyzes the reduction of ubiquinone-1 to ubiquinol by two successive reactions, coupled with the transport of Na(+) ions from the cytoplasm to the periplasm. NqrA to NqrE are probably involved in the second step, the conversion of ubisemiquinone to ubiquinol. The polypeptide is Na(+)-translocating NADH-quinone reductase subunit A (Neisseria meningitidis serogroup A / serotype 4A (strain DSM 15465 / Z2491)).